Consider the following 105-residue polypeptide: Membrane-stabilizing protein A (105 aa).

Residues Met1 to Phe21 form a helical membrane-spanning segment. The Cytoplasmic portion of the chain corresponds to Lys22–Arg29. Residues Ile30 to Phe50 form a helical membrane-spanning segment. Over Pro51–Trp55 the chain is Extracellular. A helical membrane pass occupies residues Trp56–Leu76. Residues Lys77–Asn84 are Cytoplasmic-facing. A helical membrane pass occupies residues Ile85–Phe105.

It belongs to the MspA family.

The protein localises to the membrane. In terms of biological role, plays a role in toxin production, resistance to host innate immune mechanisms, and iron homeostasis. The polypeptide is Membrane-stabilizing protein A (Staphylococcus aureus (strain NCTC 8325 / PS 47)).